The following is a 136-amino-acid chain: uncharacterized protein (136 aa).

2 disordered regions span residues 58–82 and 112–136; these read TSDD…TTQT and NNPK…VVTQ.

This is an uncharacterized protein from Dictyostelium discoideum (Social amoeba).